The primary structure comprises 51 residues: uncharacterized protein (51 aa).

A helical transmembrane segment spans residues 10 to 29 (LFLYHPLFLLLLYIYLVLFI).

The protein resides in the plastid. It is found in the chloroplast membrane. This is an uncharacterized protein from Anthoceros angustus (Hornwort).